We begin with the raw amino-acid sequence, 727 residues long: MKLLLFAAWFSSLLDPCRFLDICQSCHPNADCDDICKCRTGYTGNGISDCRDDNECETVPEICGLHANCTNYVGGYYCNCLSGFISNGTEQFQTNDGTSCNDINECEEDRKCGPNSKCHNNIGSFICSCLRGYTSPAGPWFMPNHGTDCIENSKIHCHQDHKCTKETVNSTLERMTNLSISERLKEIRYQTSAALSPVLLISYIEAMVSSKLNSGDVSKDSKEHVNETITNLVFSVNNLVEKDEKVEWKKINEDLRMYYVTKLLHTAEKETLALSAGYTHATQMQVHAGDVEMKLYTFEPRQAQKHPLSANIQGNSISLSTKKARHANNNGSTSVVFLIYHSIGDLLKPADDPGVADYSRYAAAGEITVNSPVIAAAISNQKTLPLNDVTFTLKHTQEIDPARDETKCAFWEYSPSMMGHWSLDGCIRTRVNTTHTSCSCNHLTHFAILMSSARANLLAHYNVLTRITQLGMVISLICLSMCIFTFWFFRDIQNTRTTIHKNLCCSLFMAQFIFLIGINKSAHKWFCSLIAGLLHYFFLAAFAWMCIEGIHLYLIVVGVIYNKGFLHRNFYAFGYGSPAVVVAISATLGYKYYGTSSVCWLSTENNFIWSFIGPAILIILVNLLAFAVIIYKVYRHTAVKKPEISHYENIRSCARGAIALLFVLGVTWAFGVMYILYETTLTAYLFTFANVFQGMFIFIFLCVLSRRIQEEYYRLFKNMPCCFECLR.

The N-terminal stretch at 1–19 is a signal peptide; sequence MKLLLFAAWFSSLLDPCRF. At 20–467 the chain is on the extracellular side; that stretch reads LDICQSCHPN…LAHYNVLTRI (448 aa). The EGF-like 1; calcium-binding domain maps to 52 to 90; the sequence is DDNECETVPEICGLHANCTNYVGGYYCNCLSGFISNGTE. Disulfide bonds link cysteine 56-cysteine 69, cysteine 63-cysteine 78, cysteine 106-cysteine 118, cysteine 112-cysteine 127, cysteine 408-cysteine 438, and cysteine 426-cysteine 440. The region spanning 102-139 is the EGF-like 2; calcium-binding domain; the sequence is DINECEEDRKCGPNSKCHNNIGSFICSCLRGYTSPAGP. The 175-residue stretch at 282-456 folds into the GAIN-B domain; it reads TQMQVHAGDV…AILMSSARAN (175 aa). The interval 408–456 is GPS; that stretch reads CAFWEYSPSMMGHWSLDGCIRTRVNTTHTSCSCNHLTHFAILMSSARAN. Residues 468-488 traverse the membrane as a helical segment; the sequence is TQLGMVISLICLSMCIFTFWF. Over 489–496 the chain is Cytoplasmic; sequence FRDIQNTR. The chain crosses the membrane as a helical span at residues 497 to 517; it reads TTIHKNLCCSLFMAQFIFLIG. At 518-535 the chain is on the extracellular side; it reads INKSAHKWFCSLIAGLLH. A helical transmembrane segment spans residues 536–556; it reads YFFLAAFAWMCIEGIHLYLIV. Topologically, residues 557–568 are cytoplasmic; it reads VGVIYNKGFLHR. Residues 569–589 traverse the membrane as a helical segment; sequence NFYAFGYGSPAVVVAISATLG. The Extracellular segment spans residues 590–609; sequence YKYYGTSSVCWLSTENNFIW. A helical transmembrane segment spans residues 610 to 630; sequence SFIGPAILIILVNLLAFAVII. At 631–654 the chain is on the cytoplasmic side; it reads YKVYRHTAVKKPEISHYENIRSCA. A helical transmembrane segment spans residues 655–675; the sequence is RGAIALLFVLGVTWAFGVMYI. Residues 676–682 lie on the Extracellular side of the membrane; the sequence is LYETTLT. Residues 683–703 traverse the membrane as a helical segment; that stretch reads AYLFTFANVFQGMFIFIFLCV.

This sequence belongs to the G-protein coupled receptor 2 family. Adhesion G-protein coupled receptor (ADGR) subfamily. Heterodimer of 2 chains generated by proteolytic processing; the large extracellular N-terminal fragment and the membrane-bound C-terminal fragment predominantly remain associated and non-covalently linked. In terms of processing, autoproteolytically processed at the GPS region of the GAIN-B domain; this cleavage modulates receptor activity.

The protein localises to the cell membrane. Its function is as follows. Orphan receptor that plays a role in vessel formation. The chain is Adhesion G protein-coupled receptor L4 from Danio rerio (Zebrafish).